The following is a 286-amino-acid chain: Pantothenate synthetase (286 aa).

32 to 39 (MGALHEGH) is a binding site for ATP. Histidine 39 (proton donor) is an active-site residue. A (R)-pantoate-binding site is contributed by glutamine 63. Residue glutamine 63 coordinates beta-alanine. Residue 149–152 (GEKD) coordinates ATP. Glutamine 155 is a (R)-pantoate binding site. ATP contacts are provided by residues leucine 178 and 186 to 189 (SSSR).

Belongs to the pantothenate synthetase family. In terms of assembly, homodimer.

The protein localises to the cytoplasm. It catalyses the reaction (R)-pantoate + beta-alanine + ATP = (R)-pantothenate + AMP + diphosphate + H(+). It functions in the pathway cofactor biosynthesis; (R)-pantothenate biosynthesis; (R)-pantothenate from (R)-pantoate and beta-alanine: step 1/1. In terms of biological role, catalyzes the condensation of pantoate with beta-alanine in an ATP-dependent reaction via a pantoyl-adenylate intermediate. In Bartonella quintana (strain Toulouse) (Rochalimaea quintana), this protein is Pantothenate synthetase.